Here is a 429-residue protein sequence, read N- to C-terminus: Adenylosuccinate synthetase (429 aa).

GTP-binding positions include Gly-12–Lys-18 and Gly-40–Thr-42. Asp-13 serves as the catalytic Proton acceptor. The Mg(2+) site is built by Asp-13 and Gly-40. Residues Asp-13–Lys-16, Asn-38–His-41, Thr-128, Arg-142, Gln-223, Thr-238, and Arg-302 each bind IMP. The active-site Proton donor is the His-41. A substrate-binding site is contributed by Val-298–Arg-304. GTP contacts are provided by residues Arg-304, Lys-330–Asp-332, and Gly-412–Gly-414.

Belongs to the adenylosuccinate synthetase family. Homodimer. Requires Mg(2+) as cofactor.

The protein localises to the cytoplasm. The enzyme catalyses IMP + L-aspartate + GTP = N(6)-(1,2-dicarboxyethyl)-AMP + GDP + phosphate + 2 H(+). The protein operates within purine metabolism; AMP biosynthesis via de novo pathway; AMP from IMP: step 1/2. Its function is as follows. Plays an important role in the de novo pathway of purine nucleotide biosynthesis. Catalyzes the first committed step in the biosynthesis of AMP from IMP. This is Adenylosuccinate synthetase from Corynebacterium efficiens (strain DSM 44549 / YS-314 / AJ 12310 / JCM 11189 / NBRC 100395).